A 1083-amino-acid polypeptide reads, in one-letter code: Neisserial autotransporter lipoprotein NalP (1083 aa).

Residues 1–27 form the signal peptide; sequence MRTTPTFPTKTFKPTAMALAVATTLSA. The N-palmitoyl cysteine moiety is linked to residue C28. A lipid anchor (S-diacylglycerol cysteine) is attached at C28. Positions 111–483 constitute a Peptidase S8 domain; sequence NDAYKNLINL…WGLLDAGKAM (373 aa). Active-site charge relay system residues include D139, H211, and S427. An Autotransporter domain is found at 809–1083; the sequence is DGLDHNGTGL…SGRVGVGYRF (275 aa). The next 12 membrane-spanning stretches (beta stranded) occupy residues 819 to 828, 844 to 852, 858 to 866, 883 to 891, 897 to 906, 931 to 941, 948 to 958, 984 to 994, 1000 to 1010, 1041 to 1052, 1057 to 1066, and 1074 to 1083; these read RVIAQTQQDG, TQTVGIAAK, TAAATLGMG, SLFAGIRHD, YLKGLFSYGR, QLGALGGVNVP, LTVEGGLRYDL, VGLAGLKLSQP, VLFATAGVERD, RLVAGLGADVEF, NGLARYSYAG, and SGRVGVGYRF.

The protein belongs to the peptidase S8 family. In terms of processing, a fusion protein of the first 44 residues with beta-lactamase is lipidated in E.coli, strongly suggesting this is a lipoprotein in situ. The lipidated form is briefly retained on the cell surface which allows it to process its endogenous substrates on the cell surface before the passenger domain is released into the medium.

The protein resides in the cell outer membrane. It is found in the cell surface. The protein localises to the secreted. In terms of biological role, major human immunogenic protein. Autotransporter with a secreted protease domain involved in processing other autotransporter proteins including App and IgA. Probably autoprocesses to release the about 70 kDa passenger domain. Processes the lactoferrin receptor lipoprotein subunit (LbpB) extracellularly, releasing it from the cell surface. LbpB release protects bacteria against complement-mediated killing by anti-LbpB antibodies. Processes NHBA. Lipidation slows its auto-processing, probably allowing it to act on endogenous substrates on the cell surface before the passenger domain is released into the medium. The C-terminal beta-barrel domain inserts into the outer membrane where it probably exports the N-terminal passenger domain. Both the cell surface protein (Neisserial autotransporter lipoprotein NalP) and the passenger domain cleave human (host) complement factor C3, generating a shorter alpha chain and a longer beta chain than normal. Plays a role in extracellular-DNA (eDNA) mediated biofilm formation. In some strains (including cc32 strain H44/76 but not cc11 strain B16B6) eDNA stimulates biofilm formation. When NalP is not expressed (and no longer processes NHBA or IgA) biofilm formation increases. This is probably because the number of positively charged, DNA-binding peptides on the cell surface rises, resulting in increased biofilm formation. Its function is as follows. Cleaves human (host) complement factor C3, generating a shorter alpha chain and a longer beta chain than normal. Does not act on mouse or rabbit C3. Cleavage causes C3b degradation by human CFI and CFH, decreases deposition of C3b on the bacteria surface and probably facilitates complement escape. The polypeptide is Neisserial autotransporter lipoprotein NalP (Neisseria meningitidis serogroup B / serotype 15 (strain H44/76)).